We begin with the raw amino-acid sequence, 35 residues long: Photosystem II reaction center protein M (35 aa).

Residues 5 to 25 (ILAFVATALFILIPTAFLLIL) form a helical membrane-spanning segment.

Belongs to the PsbM family. As to quaternary structure, PSII is composed of 1 copy each of membrane proteins PsbA, PsbB, PsbC, PsbD, PsbE, PsbF, PsbH, PsbI, PsbJ, PsbK, PsbL, PsbM, PsbT, PsbX, PsbY, PsbZ, Psb30/Ycf12, at least 3 peripheral proteins of the oxygen-evolving complex and a large number of cofactors. It forms dimeric complexes.

Its subcellular location is the plastid. The protein resides in the chloroplast thylakoid membrane. In terms of biological role, one of the components of the core complex of photosystem II (PSII). PSII is a light-driven water:plastoquinone oxidoreductase that uses light energy to abstract electrons from H(2)O, generating O(2) and a proton gradient subsequently used for ATP formation. It consists of a core antenna complex that captures photons, and an electron transfer chain that converts photonic excitation into a charge separation. This subunit is found at the monomer-monomer interface. The polypeptide is Photosystem II reaction center protein M (Adiantum capillus-veneris (Maidenhair fern)).